Consider the following 298-residue polypeptide: Mitochondrial 2-oxodicarboxylate carrier (298 aa).

Solcar repeat units lie at residues 10-99, 106-195, and 204-293; these read HETC…YKKF, SPGL…VKDN, and LEFL…TYAW. Helical transmembrane passes span 16 to 36, 69 to 88, 112 to 132, 166 to 186, 204 to 224, and 276 to 296; these read VAAG…LDVV, FGFY…KRAV, PIAG…FEVV, GLNK…MTYF, LEFL…SVFN, and LGPG…WLQE.

Belongs to the mitochondrial carrier (TC 2.A.29) family. Widely expressed.

The protein resides in the mitochondrion inner membrane. The catalysed reaction is 2-oxoadipate(in) + 2-oxoglutarate(out) = 2-oxoadipate(out) + 2-oxoglutarate(in). It catalyses the reaction hexanedioate(in) + 2-oxoglutarate(out) = hexanedioate(out) + 2-oxoglutarate(in). It carries out the reaction L-2-aminoadipate(in) + 2-oxoglutarate(out) = L-2-aminoadipate(out) + 2-oxoglutarate(in). The enzyme catalyses glutarate(in) + 2-oxoglutarate(out) = glutarate(out) + 2-oxoglutarate(in). The catalysed reaction is 2-oxoheptanedioate(in) + 2-oxoglutarate(out) = 2-oxoheptanedioate(out) + 2-oxoglutarate(in). It catalyses the reaction heptanedioate(in) + 2-oxoglutarate(out) = heptanedioate(out) + 2-oxoglutarate(in). It carries out the reaction citrate(in) + 2-oxoglutarate(out) = citrate(out) + 2-oxoglutarate(in). Transports dicarboxylates across the inner membranes of mitochondria by a counter-exchange mechanism. Can transport 2-oxoadipate (2-oxohexanedioate), 2-oxoglutarate, adipate (hexanedioate), glutarate, and to a lesser extent, pimelate (heptanedioate), 2-oxopimelate (2-oxoheptanedioate), 2-aminoadipate (2-aminohexanedioate), oxaloacetate, and citrate. Plays a central role in catabolism of lysine, hydroxylysine, and tryptophan, by transporting common metabolite intermediates (such as 2-oxoadipate) into the mitochondria, where it is converted into acetyl-CoA and can enter the citric acid (TCA) cycle. This is Mitochondrial 2-oxodicarboxylate carrier (Slc25a21) from Rattus norvegicus (Rat).